The following is a 100-amino-acid chain: Large ribosomal subunit protein eL14 (100 aa).

Belongs to the eukaryotic ribosomal protein eL14 family.

This chain is Large ribosomal subunit protein eL14, found in Aeropyrum pernix (strain ATCC 700893 / DSM 11879 / JCM 9820 / NBRC 100138 / K1).